Reading from the N-terminus, the 103-residue chain is Large ribosomal subunit protein uL24 (103 aa).

It belongs to the universal ribosomal protein uL24 family. In terms of assembly, part of the 50S ribosomal subunit.

In terms of biological role, one of two assembly initiator proteins, it binds directly to the 5'-end of the 23S rRNA, where it nucleates assembly of the 50S subunit. Its function is as follows. One of the proteins that surrounds the polypeptide exit tunnel on the outside of the subunit. This chain is Large ribosomal subunit protein uL24, found in Syntrophomonas wolfei subsp. wolfei (strain DSM 2245B / Goettingen).